A 2555-amino-acid chain; its full sequence is Squalestatin hexaketide synthase clz14 (2555 aa).

Positions 1–84 (MDVSKEAGHH…PNATSTTTTT (84 aa)) are disordered. Low complexity predominate over residues 10–84 (HANGFANGNT…PNATSTTTTT (75 aa)). Positions 91 to 511 (QVPVAICGIG…GSNTHIIIDS (421 aa)) constitute a Ketosynthase family 3 (KS3) domain. Residues Cys261, His398, and His435 each act as for beta-ketoacyl synthase activity in the active site. Residues 611 to 928 (FIFTGQGAQW…LEGIGKLFCF (318 aa)) form a malonyl-CoA:ACP transacylase (MAT) domain region. The tract at residues 975-1104 (HELLGERSLE…GLVTASVVTS (130 aa)) is N-terminal hotdog fold. A dehydratase (DH) domain region spans residues 975–1256 (HELLGERSLE…RGFKCKKTDD (282 aa)). One can recognise a PKS/mFAS DH domain in the interval 975–1260 (HELLGERSLE…CKKTDDAFIQ (286 aa)). The active-site Proton acceptor; for dehydratase activity is His1007. The segment at 1117-1260 (SRKVDTSRWY…CKKTDDAFIQ (144 aa)) is C-terminal hotdog fold. Asp1177 acts as the Proton donor; for dehydratase activity in catalysis. The methyltransferase (CMet) domain stretch occupies residues 1424–1595 (SFFQAAGLNK…GFEGAGTVVL (172 aa)). The segment at 1821-2141 (GMLNTLHWVG…RGVHMGRIVV (321 aa)) is enoyl reductase (ER) (ER) domain. Positions 2165–2338 (STYLLTGGMG…PASVIDIAAI (174 aa)) are ketoreductase (KR) domain. Residues 2468–2546 (IIFAQEIAKR…SLGRLATKRL (79 aa)) form the Carrier domain. An O-(pantetheine 4'-phosphoryl)serine modification is found at Ser2505.

Its pathway is secondary metabolite biosynthesis. In terms of biological role, highly reducing polyketide synthase (HR-PKS); part of the gene cluster that mediates the biosynthesis of squalestatin S1 (SQS1, also known as zaragozic acid A), a heavily oxidized fungal polyketide that offers potent cholesterol lowering activity by targeting squalene synthase (SS). SQS1 is composed of a 2,8-dioxobicyclic[3.2.1]octane-3,4,5-tricarboxyclic acid core that is connected to two lipophilic polyketide arms. These initial steps feature the priming of an unusual benzoic acid starter unit onto the highly reducing polyketide synthase clz14, followed by oxaloacetate extension and product release to generate a tricarboxylic acid containing product. The phenylalanine ammonia lyase (PAL) clz10 and the acyl-CoA ligase clz12 are involved in transforming phenylalanine into benzoyl-CoA. The citrate synthase-like protein clz17 is involved in connecting the C-alpha-carbons of the hexaketide chain and oxaloacetate to afford the tricarboxylic acid unit. The potential hydrolytic enzymes, clz11 and clz13, are in close proximity to pks2 and may participate in product release. On the other side, the tetraketide arm is synthesized by a the squalestatin tetraketide synthase clz2 and enzymatically esterified to the core in the last biosynthetic step, by the acetyltransferase clz6. The biosynthesis of the tetraketide must involve 3 rounds of chain extension. After the first and second rounds methyl-transfer occurs, and in all rounds of extension the ketoreductase and dehydratase are active. The enoyl reductase and C-MeT of clz2 are not active in the final round of extension. The acetyltransferase clz6 appears to have a broad substrate selectivity for its acyl CoA substrate, allowing the in vitro synthesis of novel squalestatins. The biosynthesis of SQS1 requires several oxidative steps likely performed by oxidoreductases clz3, clz15 and clz16. Finally, in support of the identification of the cluster as being responsible for SQS1 production, the cluster contains a gene encoding a putative squalene synthase (SS) clz20, suggesting a likely mechanism for self-resistance. The chain is Squalestatin hexaketide synthase clz14 from Cochliobolus lunatus (Filamentous fungus).